We begin with the raw amino-acid sequence, 251 residues long: uncharacterized protein (251 aa).

10 to 34 (ITGAGSGIGKKAAVMFAERGAKVAI) is an NADP(+) binding site. Serine 139 is a binding site for substrate. The active-site Proton acceptor is tyrosine 152.

The protein belongs to the short-chain dehydrogenases/reductases (SDR) family.

This is an uncharacterized protein from Thermotoga maritima (strain ATCC 43589 / DSM 3109 / JCM 10099 / NBRC 100826 / MSB8).